The following is a 262-amino-acid chain: Hydroxyethylthiazole kinase (262 aa).

Methionine 50 lines the substrate pocket. ATP-binding residues include arginine 125 and threonine 171. Glycine 198 is a binding site for substrate.

This sequence belongs to the Thz kinase family. Requires Mg(2+) as cofactor.

The enzyme catalyses 5-(2-hydroxyethyl)-4-methylthiazole + ATP = 4-methyl-5-(2-phosphooxyethyl)-thiazole + ADP + H(+). Its pathway is cofactor biosynthesis; thiamine diphosphate biosynthesis; 4-methyl-5-(2-phosphoethyl)-thiazole from 5-(2-hydroxyethyl)-4-methylthiazole: step 1/1. In terms of biological role, catalyzes the phosphorylation of the hydroxyl group of 4-methyl-5-beta-hydroxyethylthiazole (THZ). In Escherichia coli O157:H7, this protein is Hydroxyethylthiazole kinase.